The sequence spans 450 residues: mRNA cleavage and polyadenylation factor CLP1 (450 aa).

ATP is bound by residues Glu29, Lys67, and Asn137–Ser142.

The protein belongs to the Clp1 family. Clp1 subfamily. In terms of assembly, component of a pre-mRNA cleavage factor complex. Interacts directly with PCF11.

It is found in the nucleus. Required for endonucleolytic cleavage during polyadenylation-dependent pre-mRNA 3'-end formation. In Yarrowia lipolytica (strain CLIB 122 / E 150) (Yeast), this protein is mRNA cleavage and polyadenylation factor CLP1.